A 288-amino-acid chain; its full sequence is ATP phosphoribosyltransferase (288 aa).

Belongs to the ATP phosphoribosyltransferase family. Long subfamily. Mg(2+) is required as a cofactor.

Its subcellular location is the cytoplasm. It carries out the reaction 1-(5-phospho-beta-D-ribosyl)-ATP + diphosphate = 5-phospho-alpha-D-ribose 1-diphosphate + ATP. Its pathway is amino-acid biosynthesis; L-histidine biosynthesis; L-histidine from 5-phospho-alpha-D-ribose 1-diphosphate: step 1/9. Its activity is regulated as follows. Feedback inhibited by histidine. In terms of biological role, catalyzes the condensation of ATP and 5-phosphoribose 1-diphosphate to form N'-(5'-phosphoribosyl)-ATP (PR-ATP). Has a crucial role in the pathway because the rate of histidine biosynthesis seems to be controlled primarily by regulation of HisG enzymatic activity. This Methanococcus maripaludis (strain C7 / ATCC BAA-1331) protein is ATP phosphoribosyltransferase.